Reading from the N-terminus, the 147-residue chain is Deoxyuridine 5'-triphosphate nucleotidohydrolase (147 aa).

Residues 63–65 (RSG), N76, and 80–82 (TID) each bind substrate.

It belongs to the dUTPase family. Mg(2+) serves as cofactor.

The enzyme catalyses dUTP + H2O = dUMP + diphosphate + H(+). Its pathway is pyrimidine metabolism; dUMP biosynthesis; dUMP from dCTP (dUTP route): step 2/2. Functionally, this enzyme is involved in nucleotide metabolism: it produces dUMP, the immediate precursor of thymidine nucleotides and it decreases the intracellular concentration of dUTP so that uracil cannot be incorporated into DNA. The chain is Deoxyuridine 5'-triphosphate nucleotidohydrolase from Chlamydia caviae (strain ATCC VR-813 / DSM 19441 / 03DC25 / GPIC) (Chlamydophila caviae).